A 206-amino-acid polypeptide reads, in one-letter code: Elongation factor Ts (206 aa).

Positions 81–84 (TDFV) are involved in Mg(2+) ion dislocation from EF-Tu.

The protein belongs to the EF-Ts family.

The protein resides in the cytoplasm. Functionally, associates with the EF-Tu.GDP complex and induces the exchange of GDP to GTP. It remains bound to the aminoacyl-tRNA.EF-Tu.GTP complex up to the GTP hydrolysis stage on the ribosome. This chain is Elongation factor Ts, found in Maridesulfovibrio salexigens (strain ATCC 14822 / DSM 2638 / NCIMB 8403 / VKM B-1763) (Desulfovibrio salexigens).